Consider the following 100-residue polypeptide: Large ribosomal subunit protein uL23 (100 aa).

This sequence belongs to the universal ribosomal protein uL23 family. As to quaternary structure, part of the 50S ribosomal subunit. Contacts protein L29, and trigger factor when it is bound to the ribosome.

Functionally, one of the early assembly proteins it binds 23S rRNA. One of the proteins that surrounds the polypeptide exit tunnel on the outside of the ribosome. Forms the main docking site for trigger factor binding to the ribosome. The chain is Large ribosomal subunit protein uL23 from Pectobacterium atrosepticum (strain SCRI 1043 / ATCC BAA-672) (Erwinia carotovora subsp. atroseptica).